Consider the following 223-residue polypeptide: Ribose-5-phosphate isomerase A (223 aa).

Substrate-binding positions include 29–32 (TGST), 82–85 (DGAD), and 95–98 (KGGG). The active-site Proton acceptor is the glutamate 104. Lysine 122 contributes to the substrate binding site.

This sequence belongs to the ribose 5-phosphate isomerase family. In terms of assembly, homodimer.

The catalysed reaction is aldehydo-D-ribose 5-phosphate = D-ribulose 5-phosphate. Its pathway is carbohydrate degradation; pentose phosphate pathway; D-ribose 5-phosphate from D-ribulose 5-phosphate (non-oxidative stage): step 1/1. In terms of biological role, catalyzes the reversible conversion of ribose-5-phosphate to ribulose 5-phosphate. The polypeptide is Ribose-5-phosphate isomerase A (Neisseria gonorrhoeae (strain ATCC 700825 / FA 1090)).